The following is an 827-amino-acid chain: Periplasmic nitrate reductase (827 aa).

Residues 1-34 (MSLTRRDFIKANAVAATAAAAGIATPAIAQPAKA) constitute a signal peptide (tat-type signal). Positions 36–92 (IRWDKGVCRFCGTGCAVLVGVQDGRVVATQGDPDSPVNRGLNCIKGYFLSKIMYGED) constitute a 4Fe-4S Mo/W bis-MGD-type domain. [4Fe-4S] cluster is bound by residues Cys-43, Cys-46, Cys-50, and Cys-78. Residues Lys-80, Gln-148, Asn-173, Cys-177, 210–217 (WGSNMAEM), 241–245 (STFEH), 260–262 (QTD), Met-371, Gln-375, Asn-481, 507–508 (SD), Lys-530, Asp-557, and 717–726 (TGRVLEHWHS) each bind Mo-bis(molybdopterin guanine dinucleotide). Phe-793 is a substrate binding site. The Mo-bis(molybdopterin guanine dinucleotide) site is built by Asn-801 and Lys-818.

This sequence belongs to the prokaryotic molybdopterin-containing oxidoreductase family. NasA/NapA/NarB subfamily. Component of the periplasmic nitrate reductase NapAB complex composed of NapA and NapB. Requires [4Fe-4S] cluster as cofactor. Mo-bis(molybdopterin guanine dinucleotide) is required as a cofactor. In terms of processing, predicted to be exported by the Tat system. The position of the signal peptide cleavage has not been experimentally proven.

It is found in the periplasm. The catalysed reaction is 2 Fe(II)-[cytochrome] + nitrate + 2 H(+) = 2 Fe(III)-[cytochrome] + nitrite + H2O. Functionally, catalytic subunit of the periplasmic nitrate reductase complex NapAB. Receives electrons from NapB and catalyzes the reduction of nitrate to nitrite. The polypeptide is Periplasmic nitrate reductase (Paramagnetospirillum magneticum (strain ATCC 700264 / AMB-1) (Magnetospirillum magneticum)).